The chain runs to 396 residues: S-adenosylmethionine synthase (396 aa).

Residue histidine 14 participates in ATP binding. Aspartate 16 is a Mg(2+) binding site. Glutamate 42 provides a ligand contact to K(+). 2 residues coordinate L-methionine: glutamate 55 and glutamine 98. A flexible loop region spans residues 98–108 (QSPDIALGVNK). Residues 174–176 (DGK), 241–242 (RF), aspartate 250, 256–257 (RK), alanine 273, and lysine 277 each bind ATP. Residue aspartate 250 participates in L-methionine binding. Lysine 281 lines the L-methionine pocket.

The protein belongs to the AdoMet synthase family. As to quaternary structure, homotetramer; dimer of dimers. Requires Mg(2+) as cofactor. K(+) serves as cofactor.

The protein resides in the cytoplasm. The enzyme catalyses L-methionine + ATP + H2O = S-adenosyl-L-methionine + phosphate + diphosphate. Its pathway is amino-acid biosynthesis; S-adenosyl-L-methionine biosynthesis; S-adenosyl-L-methionine from L-methionine: step 1/1. In terms of biological role, catalyzes the formation of S-adenosylmethionine (AdoMet) from methionine and ATP. The overall synthetic reaction is composed of two sequential steps, AdoMet formation and the subsequent tripolyphosphate hydrolysis which occurs prior to release of AdoMet from the enzyme. The chain is S-adenosylmethionine synthase from Pseudothermotoga lettingae (strain ATCC BAA-301 / DSM 14385 / NBRC 107922 / TMO) (Thermotoga lettingae).